A 109-amino-acid chain; its full sequence is Thioredoxin-like protein slr1139 (109 aa).

A Thioredoxin domain is found at 2–107 (SLLEITDAEF…LLELLKEELD (106 aa)). Cys31 and Cys34 form a disulfide bridge.

Belongs to the thioredoxin family.

The chain is Thioredoxin-like protein slr1139 from Synechocystis sp. (strain ATCC 27184 / PCC 6803 / Kazusa).